The following is a 141-amino-acid chain: Nucleoside diphosphate kinase (141 aa).

6 residues coordinate ATP: K11, F59, R87, T93, R104, and N114. H117 acts as the Pros-phosphohistidine intermediate in catalysis.

The protein belongs to the NDK family. In terms of assembly, homotetramer. The cofactor is Mg(2+).

The protein resides in the cytoplasm. It carries out the reaction a 2'-deoxyribonucleoside 5'-diphosphate + ATP = a 2'-deoxyribonucleoside 5'-triphosphate + ADP. The enzyme catalyses a ribonucleoside 5'-diphosphate + ATP = a ribonucleoside 5'-triphosphate + ADP. Major role in the synthesis of nucleoside triphosphates other than ATP. The ATP gamma phosphate is transferred to the NDP beta phosphate via a ping-pong mechanism, using a phosphorylated active-site intermediate. The chain is Nucleoside diphosphate kinase from Serratia proteamaculans (strain 568).